Consider the following 585-residue polypeptide: MEQYEVLEQIGKGSFGSALLVRHKVEKKRYVLKKIRLARQTDRCRRSAHQEMELIAKVRNPYIVEYKDSWVEKGCYVCIVIGYCEGGDMSEAIKKANSNYFSEERLCMWLVQLLMALDYLHVNHILHRDVKCSNIFLTKDQNIRLGDFGLAKVLTSDDLTSSVVGTPSYMCPELLADIPYGSKSDIWSLGCCLYEMTALKPAFKAFDMQTLINKISKSVLAPLPTIYSGAFRGLIKSMLRKSPDHRPSAAELLKHPHLQPFVLELQLKSSPARNLFPDTNKASCSDDENNWKAKYSKSHSFKVDRIVKVDKVAANNGHPSSTGTAKDYQELLKQPMDELLGQLTEKVVDEVIHGNHSRVTKSPAPTPRRASSTPRIRLEPSKTFHARAAETPPSKCSLERASQPTRRASTPVNMLQTPEKRQGADILTRLKSPDVSVNSPRIDRIAEFPIPSFDDEQLHPTTKLKLYPPSITDQSITKDKCTFQVLRSDSSKNHTGDSSDPSILGTDSNPLITSSSDWMKQRRFDTTSYRQRAEALEGLLEFSAQLLQQERFEELGILLKPFGPGKASPRETAIWLSKSFKGTGL.

A Protein kinase domain is found at 4–258 (YEVLEQIGKG…AAELLKHPHL (255 aa)). Residues 10-18 (IGKGSFGSA) and K33 each bind ATP. Catalysis depends on D129, which acts as the Proton acceptor. 2 disordered regions span residues 354-413 (GNHS…TPVN) and 489-511 (DSSKNHTGDSSDPSILGTDSNPL). Composition is skewed to polar residues over residues 400–413 (RASQPTRRASTPVN) and 498–511 (SSDPSILGTDSNPL).

The protein belongs to the protein kinase superfamily. NEK Ser/Thr protein kinase family. NIMA subfamily. Interacts with PLIM2B. Expressed in pollen grains.

It carries out the reaction L-seryl-[protein] + ATP = O-phospho-L-seryl-[protein] + ADP + H(+). The enzyme catalyses L-threonyl-[protein] + ATP = O-phospho-L-threonyl-[protein] + ADP + H(+). May be involved in plant development processes. May function downstream of DCW11 in retrograde signaling from the mitochondria to the nucleus. Seems to be involved in the mechanism of cytoplasmic male sterility (CMS) occurrence. This is Serine/threonine-protein kinase Nek3 from Oryza sativa subsp. japonica (Rice).